Here is a 978-residue protein sequence, read N- to C-terminus: Rab3 GTPase-activating protein catalytic subunit (978 aa).

Disordered regions lie at residues 533-554 (EGKK…TASD), 586-621 (HSDT…RLHQ), and 908-936 (EEEP…GREL). The span at 540 to 554 (LYSSSESSVNKTASD) shows a compositional bias: polar residues. Composition is skewed to basic and acidic residues over residues 586–619 (HSDT…EGRL) and 909–922 (EEPK…DRRQ).

It belongs to the Rab3-GAP catalytic subunit family. As to quaternary structure, the Rab3 GTPase-activating complex is a heterodimer composed of rab3gap1 and rab3gap2. The Rab3 GTPase-activating complex interacts with DMXL2. Interacts with LMAN1.

Its subcellular location is the cytoplasm. The protein resides in the endoplasmic reticulum. It localises to the golgi apparatus. It is found in the cis-Golgi network. Functionally, catalytic subunit of the Rab3 GTPase-activating (Rab3GAP) complex composed of rab3gap1 and rab3gap2, which has GTPase-activating protein (GAP) activity towards various Rab3 subfamily members (RAB3A, RAB3B, RAB3C and RAB3D), RAB5A and RAB43, and guanine nucleotide exchange factor (GEF) activity towards RAB18. As part of the Rab3GAP complex, acts as a GAP for Rab3 proteins by converting active RAB3-GTP to the inactive form RAB3-GDP. Rab3 proteins are involved in regulated exocytosis of neurotransmitters and hormones. The Rab3GAP complex, acts as a GEF for RAB18 by promoting the conversion of inactive RAB18-GDP to the active form RAB18-GTP. Recruits and stabilizes RAB18 at the cis-Golgi membrane where RAB18 is most likely activated. Also involved in RAB18 recruitment at the endoplasmic reticulum (ER) membrane where it maintains proper ER structure. Required for normal eye and brain development. May participate in neurodevelopmental processes such as proliferation, migration and differentiation before synapse formation, and non-synaptic vesicular release of neurotransmitters. The protein is Rab3 GTPase-activating protein catalytic subunit (rab3gap1) of Xenopus laevis (African clawed frog).